Reading from the N-terminus, the 145-residue chain is Ponticulin-like protein B (145 aa).

A signal peptide spans 1-22 (MLFIKSLLLLLSLIFAVSNATG). Asn-34 carries an N-linked (GlcNAc...) asparagine glycan. The interval 107–126 (DTTSSSTSPSSTSPSSTSPA) is disordered. Positions 108–126 (TTSSSTSPSSTSPSSTSPA) are enriched in low complexity. Ser-117 is lipidated: GPI-like-anchor amidated serine. A propeptide spans 118–145 (TSPSSTSPASTLIGSIAFVTLAALFALI) (removed in mature form).

It belongs to the ponticulin family. Post-translationally, the GPI-like-anchor contains a phosphoceramide group, rather than a phosphatidyl group.

It localises to the cell membrane. Its function is as follows. Binds F-actin and nucleates actin assembly. In Dictyostelium discoideum (Social amoeba), this protein is Ponticulin-like protein B (ponB).